We begin with the raw amino-acid sequence, 1412 residues long: DNA-directed RNA polymerase subunit beta' (1412 aa).

Residues Cys-70, Cys-72, Cys-85, and Cys-88 each coordinate Zn(2+). Positions 460, 462, and 464 each coordinate Mg(2+). Residues Cys-819, Cys-893, Cys-900, and Cys-903 each contribute to the Zn(2+) site. The interval 1391–1412 is disordered; the sequence is AEESFEFGTPETPAAEQQHSGE.

Belongs to the RNA polymerase beta' chain family. The RNAP catalytic core consists of 2 alpha, 1 beta, 1 beta' and 1 omega subunit. When a sigma factor is associated with the core the holoenzyme is formed, which can initiate transcription. Mg(2+) is required as a cofactor. The cofactor is Zn(2+).

The enzyme catalyses RNA(n) + a ribonucleoside 5'-triphosphate = RNA(n+1) + diphosphate. In terms of biological role, DNA-dependent RNA polymerase catalyzes the transcription of DNA into RNA using the four ribonucleoside triphosphates as substrates. The protein is DNA-directed RNA polymerase subunit beta' of Paraburkholderia xenovorans (strain LB400).